A 161-amino-acid chain; its full sequence is Type IV major fimbrial protein FimA (161 aa).

Residues 1 to 7 (MKSLQKG) constitute a propeptide, leader sequence. Residue Phe8 is modified to N-methylphenylalanine. A helical membrane pass occupies residues 8–28 (FTLIELMIVVAIIGILAAFAI). An intrachain disulfide couples Cys63 to Cys106.

The protein belongs to the N-Me-Phe pilin family. As to quaternary structure, the pili are polar flexible filaments of about 5.4 nanometers diameter and 2.5 micrometers average length; they consist of only a single polypeptide chain arranged in a helical configuration of five subunits per turn in the assembled pilus.

The protein resides in the fimbrium. It localises to the membrane. In terms of biological role, major component of the type IV fimbriae that plays an essential role in twitching motility, natural transformation, and protease secretion. The polypeptide is Type IV major fimbrial protein FimA (fimA) (Dichelobacter nodosus (Bacteroides nodosus)).